The sequence spans 518 residues: GMP synthase [glutamine-hydrolyzing] (518 aa).

A Glutamine amidotransferase type-1 domain is found at 13-203 (KIIVLDFGSQ…ALNVCGCKGD (191 aa)). The active-site Nucleophile is the C90. Residues H177 and E179 contribute to the active site. One can recognise a GMPS ATP-PPase domain in the interval 204 to 393 (WTMENFSEVE…LGMPDAIVWR (190 aa)). 231–237 (SGGVDSS) serves as a coordination point for ATP.

As to quaternary structure, homodimer.

It carries out the reaction XMP + L-glutamine + ATP + H2O = GMP + L-glutamate + AMP + diphosphate + 2 H(+). It functions in the pathway purine metabolism; GMP biosynthesis; GMP from XMP (L-Gln route): step 1/1. Its function is as follows. Catalyzes the synthesis of GMP from XMP. The polypeptide is GMP synthase [glutamine-hydrolyzing] (Listeria monocytogenes serovar 1/2a (strain ATCC BAA-679 / EGD-e)).